An 867-amino-acid polypeptide reads, in one-letter code: Programmed cell death 6-interacting protein (867 aa).

Residues 3-391 form the BRO1 domain; the sequence is TFISVPLKKT…AQMRDATIFA (389 aa). Disordered stretches follow at residues 714–809 and 835–867; these read REPS…PYPS and IPPY…FPPQ. Low complexity predominate over residues 729–744; it reads SAPSSISTNIATSSIP. Residues 756-766 show a composition bias toward pro residues; the sequence is QPPPRPPPPAM. Over residues 767–791 the composition is skewed to low complexity; that stretch reads PSASPVPASAAQASNPAPTAAADSS. Polar residues predominate over residues 792–803; the sequence is QPPSNTIPSQAQ. The span at 852–861 shows a compositional bias: low complexity; the sequence is QQPSFSYPQQ.

In terms of processing, phosphorylated on tyrosine residues.

Its subcellular location is the cytoplasm. The protein localises to the cytosol. It localises to the melanosome. It is found in the cytoskeleton. The protein resides in the microtubule organizing center. Its subcellular location is the centrosome. The protein localises to the secreted. It localises to the extracellular exosome. It is found in the cell junction. The protein resides in the tight junction. Its subcellular location is the midbody. The protein localises to the midbody ring. Multifunctional protein that may be involved in endocytosis, multivesicular body biogenesis, membrane repair, cytokinesis, apoptosis and maintenance of tight junction integrity. Class E VPS protein involved in concentration and sorting of cargo proteins of the multivesicular body (MVB) for incorporation into intralumenal vesicles that are generated by invagination and scission from the limiting membrane of the endosome. Binds to the phospholipid lysobisphosphatidic acid (LBPA) which is abundant in MVBs internal membranes. May play a role in the regulation of both apoptosis and cell proliferation. Regulates exosome biogenesis in concert with SDC1/4 and SDCBP. Ensures the proper assembly and positioning of actomyosin-tight junction complex at the apical sides of adjacent epithelial cells that defines a spatial membrane domain essential for the maintenance of epithelial cell polarity and barrier. The sequence is that of Programmed cell death 6-interacting protein (pdcd6ip) from Xenopus laevis (African clawed frog).